The chain runs to 539 residues: CTP synthase (539 aa).

Residues 1-268 (MSFKSIFLTG…SDFLLNKLGF (268 aa)) form an amidoligase domain region. Serine 14 lines the CTP pocket. Serine 14 lines the UTP pocket. Position 15–20 (15–20 (SLGKGL)) interacts with ATP. Tyrosine 55 is an L-glutamine binding site. Aspartate 72 is a binding site for ATP. Mg(2+) is bound by residues aspartate 72 and glutamate 142. CTP contacts are provided by residues 149-151 (DIE), 188-193 (KTKPTQ), and lysine 224. UTP is bound by residues 188–193 (KTKPTQ) and lysine 224. The Glutamine amidotransferase type-1 domain maps to 294 to 532 (RIGLVGKYLE…IRAAKAYSLE (239 aa)). Glycine 353 contributes to the L-glutamine binding site. Cysteine 380 functions as the Nucleophile; for glutamine hydrolysis in the catalytic mechanism. L-glutamine-binding positions include 381 to 384 (LGMQ), glutamate 404, and arginine 460. Residues histidine 505 and glutamate 507 contribute to the active site.

The protein belongs to the CTP synthase family. In terms of assembly, homotetramer.

It catalyses the reaction UTP + L-glutamine + ATP + H2O = CTP + L-glutamate + ADP + phosphate + 2 H(+). The catalysed reaction is L-glutamine + H2O = L-glutamate + NH4(+). The enzyme catalyses UTP + NH4(+) + ATP = CTP + ADP + phosphate + 2 H(+). Its pathway is pyrimidine metabolism; CTP biosynthesis via de novo pathway; CTP from UDP: step 2/2. With respect to regulation, allosterically activated by GTP, when glutamine is the substrate; GTP has no effect on the reaction when ammonia is the substrate. The allosteric effector GTP functions by stabilizing the protein conformation that binds the tetrahedral intermediate(s) formed during glutamine hydrolysis. Inhibited by the product CTP, via allosteric rather than competitive inhibition. Functionally, catalyzes the ATP-dependent amination of UTP to CTP with either L-glutamine or ammonia as the source of nitrogen. Regulates intracellular CTP levels through interactions with the four ribonucleotide triphosphates. The polypeptide is CTP synthase (Chlamydia trachomatis serovar A (strain ATCC VR-571B / DSM 19440 / HAR-13)).